Reading from the N-terminus, the 1258-residue chain is MKEDKVLILRTCANNMADHGGIIWPLSGIVECKYWKPVKGFENGLTGLIWGKGSDSPLSLHADARWVVAEVDADECIAIETHGWIKFPRAEVLHVGTKTSAMQFILHHRADYVACTEMQAGPGSPDVTSEVKVGNRSLPVTDDIDATIESGSTQPTQTIEIATYGSTLSGTHQSQLIAGYGSTETAGDSSTLIAGYGSTGTAGADSTLVAGYGSTQTAGEESSQMAGYGSTQTGMKGSDLTAGYGSTGTAGDDSSLIAGYGSTQTAGEDSSLTAGYGSTQTAQKGSDLTAGYGSTGTAGADSSLIAGYGSTQTAGEESTQTAGYGSTQTAQKGSDLTAGYGSTGTAGDDSSLIAGYGSTQTAGEDSSLTAGYGSTQTAQKGSDLTAGYGSTGTAGADSSLIAGYGSTQTAGEESTQTAGYGSTQTAQKGSDLTAGYGSTGTAGDDSSLIAGYGSTQTAGEDSSLTAGYGSTQTAQKGSDLTAGYGSTSTAGYESSLIAGYGSTQTAGYGSTLTAGYGSTQTAQNESDLITGYGSTSTAGANSSLIAGYGSTQTASYNSVLTAGYGSTQTAREGSDLTAGYGSTGTAGSDSSIIAGYGSTQTASYHSSLTAGYGSTQTAREQSVLTTGYGSTSTAGADSSLIAGYGSTQTAGYNSILTAGYGSTQTAQEGSDLTAGYGSTSTAGADSSLIAGYGSTQTAGYNSILTAGYGSTQTAQEGSDLTSGYGSTSTAGADSSLIAGYGSTQTASYHSSLTAGYGSTQTAREQSVLTTGYGSTSTAGADSSLIAGYGSTQTAGYHSILTAGYGSTQTAQERSDLTTGYGSTSTAGADSSLIAGYGSTQTAGYNSILTAGYGSTQTAQENSDLTTGYGSTSTAGYDSSLIAGYGSTQTAGYNSILTAGYGSTQTAQENSDLTTGYGSTSTAGYESSLIAGYGSTQTASFKSTLMAGYGSSQTAREQSSLTAGYGSTSMAGYDSSLIAGYGSTQTAGYQSTLTAGYGSTQTAEHSSTLTAGYGSTATAGADSSLIAGYGSSLTSGIRSFLTAGYGSTLISGLRSVLTAGYGSSLISGRRSSLTAGYGSNQIASHRSSLIAGPESTQITGNRSMLIAGKGSSQTAGYRSTLISGADSVQMAGERGKLIAGADSTQTAGDRSKLLAGNNSYLTAGDRSKLTAGNDCILMAGDRSKLTAGINSILTAGCRSKLIGSNGSTLTAGENSVLIFRCWDGKRYTNVVAKTGKGGIEADMPYQMDEDNNIVNKPEE.

The segment at 162 to 1217 is octapeptide periodicity; the sequence is ATYGSTLSGT…LTAGENSVLI (1056 aa). 5 disordered regions span residues 260–287, 311–342, 356–383, 407–438, and 452–480; these read YGSTQTAGEDSSLTAGYGSTQTAQKGSD, TQTAGEESTQTAGYGSTQTAQKGSDLTAGYGS, and YGSTQTAGEDSSLTAGYGSTQTAQKGSDL. 5 stretches are compositionally biased toward polar residues: residues 261-286, 311-334, 357-382, 407-430, and 453-480; these read GSTQTAGEDSSLTAGYGSTQTAQKGS, TQTAGEESTQTAGYGSTQTAQKGS, and GSTQTAGEDSSLTAGYGSTQTAQKGSDL.

This sequence belongs to the bacterial ice nucleation protein family.

The protein resides in the cell outer membrane. Functionally, ice nucleation proteins enable bacteria to nucleate crystallization in supercooled water. The sequence is that of Ice nucleation protein (iceE) from Enterobacter agglomerans (Erwinia herbicola).